Consider the following 265-residue polypeptide: Undecaprenyl-diphosphatase (265 aa).

Transmembrane regions (helical) follow at residues 38-58, 80-100, 107-127, 135-155, 175-195, 213-233, and 244-264; these read SDMF…IIYW, LIVA…LGFE, PIAW…WAAA, ITWL…VFPG, AAAT…ASGY, ALAI…KWLL, and FAIY…TGMI.

Belongs to the UppP family.

It is found in the cell inner membrane. The enzyme catalyses di-trans,octa-cis-undecaprenyl diphosphate + H2O = di-trans,octa-cis-undecaprenyl phosphate + phosphate + H(+). Its function is as follows. Catalyzes the dephosphorylation of undecaprenyl diphosphate (UPP). Confers resistance to bacitracin. This Rhizobium etli (strain ATCC 51251 / DSM 11541 / JCM 21823 / NBRC 15573 / CFN 42) protein is Undecaprenyl-diphosphatase.